A 55-amino-acid chain; its full sequence is Large ribosomal subunit protein bL33A (55 aa).

This sequence belongs to the bacterial ribosomal protein bL33 family.

The protein is Large ribosomal subunit protein bL33A of Mycobacterium ulcerans (strain Agy99).